The primary structure comprises 213 residues: RPW8-like protein 3 (213 aa).

An RPW8 domain is found at 1–153 (MPVSEIMAGA…ITRQPTDCIC (153 aa)). A helical transmembrane segment spans residues 7–23 (MAGAALGLALQVLHDAI). Coiled coils occupy residues 70 to 93 (EDLKHLLEKAVSLVEAYAELRRRN) and 125 to 147 (VDIKELMAKMSEMNTKLDEITRQ). Residue N157 is glycosylated (N-linked (GlcNAc...) asparagine).

Belongs to the plant RPW8 protein family.

The protein resides in the membrane. Its function is as follows. Probable disease resistance (R) protein. In Arabidopsis thaliana (Mouse-ear cress), this protein is RPW8-like protein 3.